The following is a 207-amino-acid chain: FMN-dependent NADH:quinone oxidoreductase 2 (207 aa).

Residues S9, 15–17, and 97–100 contribute to the FMN site; these read SAS and MWNF.

The protein belongs to the azoreductase type 1 family. Homodimer. FMN serves as cofactor.

It catalyses the reaction 2 a quinone + NADH + H(+) = 2 a 1,4-benzosemiquinone + NAD(+). The enzyme catalyses N,N-dimethyl-1,4-phenylenediamine + anthranilate + 2 NAD(+) = 2-(4-dimethylaminophenyl)diazenylbenzoate + 2 NADH + 2 H(+). Quinone reductase that provides resistance to thiol-specific stress caused by electrophilic quinones. In terms of biological role, also exhibits azoreductase activity. Catalyzes the reductive cleavage of the azo bond in aromatic azo compounds to the corresponding amines. In Burkholderia lata (strain ATCC 17760 / DSM 23089 / LMG 22485 / NCIMB 9086 / R18194 / 383), this protein is FMN-dependent NADH:quinone oxidoreductase 2.